Consider the following 81-residue polypeptide: MKTLLLTLVVVTIVCLDLGYTLKCNKLVPLFYKTCPAGKNLCYKMYMVATPKVPVKRGCIDVCPKSSLLVKYVCCNTDRCN.

The signal sequence occupies residues 1–21 (MKTLLLTLVVVTIVCLDLGYT). Cystine bridges form between C24/C42, C35/C59, C63/C74, and C75/C80.

It belongs to the three-finger toxin family. Short-chain subfamily. Type IA cytotoxin sub-subfamily. As to quaternary structure, monomer in solution; homodimer and oligomer in the presence of negatively charged lipids forming a pore with a size ranging between 20 and 30 Angstroms. Expressed by the venom gland.

The protein localises to the secreted. It is found in the target cell membrane. In terms of biological role, shows cytolytic activity on many different cells by forming pores in lipid membranes. Exhibits concentration-dependent growth inhibitory effects in the lung cell lines A549 (IC(50)= 0.88) and NL20 (IC(50)= 1.91), in the prostate cell lines PC-3 (IC(50)= 3.13 ug/ml) and RWPE-1 (IC(50)=0.35 ug/ml), and in the breast cell lines MCF-7 (IC(50)= 9.10 ug/ml) and 184B5 (IC(50)=6.21 ug/ml), with high selectivity for the lung cancer cell line A549 (selectivity index=2.17). Induces primarily necrosis in the A549 lung cancer cell line, and mainly caspase-independent late apoptosis in the breast cancer cells line MCF-7 and in the prostate cancer cell line PC-3. This is Cytotoxin 1 from Naja sumatrana (Equatorial spitting cobra).